We begin with the raw amino-acid sequence, 485 residues long: UDP-glycosyltransferase 91D1 (485 aa).

Residues Ser296, 355-356, 373-381, and 395-398 each bind UDP-alpha-D-glucose; these read WA, HCGSGSIVE, and FCDQ.

This sequence belongs to the UDP-glycosyltransferase family.

May glycosylate diterpenes or flavonols in leaves. The chain is UDP-glycosyltransferase 91D1 from Stevia rebaudiana (Stevia).